The following is a 547-amino-acid chain: Zinc metalloproteinase-disintegrin-like BjussuMP-1 (547 aa).

Residues 1-133 (EFKVNGEPVV…KKASKLVVTA (133 aa)) constitute a propeptide that is removed on maturation. One can recognise a Peptidase M12B domain in the interval 141 to 337 (RYVEIVVVVD…HNPQCILNEP (197 aa)). Residues glutamate 144 and aspartate 228 each coordinate Ca(2+). Intrachain disulfides connect cysteine 252–cysteine 332, cysteine 292–cysteine 316, and cysteine 294–cysteine 299. Histidine 277 lines the Zn(2+) pocket. Glutamate 278 is an active-site residue. Positions 281 and 287 each coordinate Zn(2+). Residues cysteine 332, asparagine 335, valine 341, asparagine 344, leucine 346, glutamate 348, glutamate 351, and aspartate 354 each contribute to the Ca(2+) site. One can recognise a Disintegrin domain in the interval 339–421 (LTVSGNELLE…DCPRNRFHRN (83 aa)). Disulfide bonds link cysteine 353–cysteine 363, cysteine 362–cysteine 385, cysteine 376–cysteine 382, cysteine 381–cysteine 406, cysteine 394–cysteine 413, cysteine 425–cysteine 437, cysteine 444–cysteine 494, cysteine 459–cysteine 501, cysteine 472–cysteine 482, cysteine 489–cysteine 526, and cysteine 520–cysteine 531. Asparagine 451 is a glycosylation site (N-linked (GlcNAc...) asparagine). An N-linked (GlcNAc...) asparagine glycan is attached at asparagine 504.

The protein belongs to the venom metalloproteinase (M12B) family. P-III subfamily. P-IIIa sub-subfamily. In terms of assembly, monomer. The cofactor is Zn(2+). Expressed by the venom gland.

Its subcellular location is the secreted. Its activity is regulated as follows. Completely inhibited by EDTA, EGTA, 1,10-phenanthroline, and partially by beta-mercaptoethanol. Is not inhibited by aprotinin and leupeptin. This protein is a zinc metalloprotease from snake venom that causes hemorrhage in mice after intradermal injection. It inhibits platelet aggregation induced by collagen and ADP. Has moderate edema activity, but no myotoxic activity. It hydrolyzes the Aalpha-chain and more slowly the Bbeta-chain of fibrinogen, without affecting the gamma-chains. It also shows proteolytic activity on casein. It is unable to clot plasma. It also shows bactericidal activity against E.coli and S.aureus. In Bothrops jararacussu (Jararacussu), this protein is Zinc metalloproteinase-disintegrin-like BjussuMP-1.